The primary structure comprises 125 residues: MTSTPGATPPASSLDPAVAARLKRGADGLVPAIAQQYDTGEVLMLGWMDDEALHRTLTTGRCTYWSRSRQEYWVKGDTSGHVQHVKSVALDCDADTVLVKVDQTGAACHTGDRTCFDADALPLGK.

D91 provides a ligand contact to Mg(2+). C92 is a binding site for Zn(2+). D93 and D95 together coordinate Mg(2+). Residues C108 and C115 each coordinate Zn(2+).

It belongs to the PRA-CH family. As to quaternary structure, homodimer. Mg(2+) is required as a cofactor. The cofactor is Zn(2+).

It localises to the cytoplasm. It carries out the reaction 1-(5-phospho-beta-D-ribosyl)-5'-AMP + H2O = 1-(5-phospho-beta-D-ribosyl)-5-[(5-phospho-beta-D-ribosylamino)methylideneamino]imidazole-4-carboxamide. It participates in amino-acid biosynthesis; L-histidine biosynthesis; L-histidine from 5-phospho-alpha-D-ribose 1-diphosphate: step 3/9. Catalyzes the hydrolysis of the adenine ring of phosphoribosyl-AMP. The polypeptide is Phosphoribosyl-AMP cyclohydrolase (Streptomyces griseus subsp. griseus (strain JCM 4626 / CBS 651.72 / NBRC 13350 / KCC S-0626 / ISP 5235)).